Consider the following 301-residue polypeptide: Probable alpha-L-glutamate ligase 1 (301 aa).

One can recognise an ATP-grasp domain in the interval 104 to 287; sequence MQLMSRRGIG…VAGAIIDFVE (184 aa). ATP-binding positions include K141, 178-179, D187, and 211-213; these read EY and RSN. Mg(2+) is bound by residues D248, E260, and N262. The Mn(2+) site is built by D248, E260, and N262.

Belongs to the RimK family. Requires Mg(2+) as cofactor. It depends on Mn(2+) as a cofactor.

In Shewanella baltica (strain OS185), this protein is Probable alpha-L-glutamate ligase 1.